We begin with the raw amino-acid sequence, 21 residues long: Complement receptor 3-related protein (21 aa).

It localises to the secreted. Its function is as follows. Plays a role in adherence of C.albicans to buccal epithelial cells, and in biofilm formation. This chain is Complement receptor 3-related protein, found in Candida albicans (Yeast).